A 426-amino-acid chain; its full sequence is UPF0329 protein ECU06_0040 (426 aa).

The span at 136–172 (RQRKREEETERSVKELVGDEEKAKSKEEKAKSKEEKA) shows a compositional bias: basic and acidic residues. A disordered region spans residues 136–230 (RQRKREEETE…GGKKKSKGGR (95 aa)). Residues 220–230 (KGGKKKSKGGR) show a composition bias toward basic residues.

It belongs to the UPF0329 family.

The sequence is that of UPF0329 protein ECU06_0040 from Encephalitozoon cuniculi (strain GB-M1) (Microsporidian parasite).